A 191-amino-acid chain; its full sequence is Peptidyl-tRNA hydrolase (191 aa).

TRNA is bound at residue tyrosine 17. Histidine 22 serves as the catalytic Proton acceptor. TRNA-binding residues include tyrosine 68, asparagine 70, and asparagine 116.

Belongs to the PTH family. Monomer.

The protein resides in the cytoplasm. The catalysed reaction is an N-acyl-L-alpha-aminoacyl-tRNA + H2O = an N-acyl-L-amino acid + a tRNA + H(+). Its function is as follows. Hydrolyzes ribosome-free peptidyl-tRNAs (with 1 or more amino acids incorporated), which drop off the ribosome during protein synthesis, or as a result of ribosome stalling. Functionally, catalyzes the release of premature peptidyl moieties from peptidyl-tRNA molecules trapped in stalled 50S ribosomal subunits, and thus maintains levels of free tRNAs and 50S ribosomes. The protein is Peptidyl-tRNA hydrolase of Francisella tularensis subsp. tularensis (strain FSC 198).